The sequence spans 664 residues: Protein-arginine deiminase type-3 (664 aa).

Belongs to the protein arginine deiminase family. Requires Ca(2+) as cofactor. As to expression, epidermis and hair follicles.

It localises to the cytoplasm. The enzyme catalyses L-arginyl-[protein] + H2O = L-citrullyl-[protein] + NH4(+). Catalyzes the deimination of arginine residues of proteins. This Rattus norvegicus (Rat) protein is Protein-arginine deiminase type-3 (Padi3).